A 210-amino-acid chain; its full sequence is Orotate phosphoribosyltransferase (210 aa).

5-phospho-alpha-D-ribose 1-diphosphate is bound by residues Arg-97, Lys-101, His-103, and 123 to 131 (EDLISTGGS). Ser-127 provides a ligand contact to orotate.

This sequence belongs to the purine/pyrimidine phosphoribosyltransferase family. PyrE subfamily. Homodimer. The cofactor is Mg(2+).

It catalyses the reaction orotidine 5'-phosphate + diphosphate = orotate + 5-phospho-alpha-D-ribose 1-diphosphate. It functions in the pathway pyrimidine metabolism; UMP biosynthesis via de novo pathway; UMP from orotate: step 1/2. Functionally, catalyzes the transfer of a ribosyl phosphate group from 5-phosphoribose 1-diphosphate to orotate, leading to the formation of orotidine monophosphate (OMP). In Enterococcus faecalis (strain ATCC 700802 / V583), this protein is Orotate phosphoribosyltransferase.